Here is an 810-residue protein sequence, read N- to C-terminus: Chloride channel protein (810 aa).

Residues 2-48 (SHEKNEASGNPEAQSWKAQEAMLGVKTEVSRWRAVKNCLYRHLVKVL) lie on the Cytoplasmic side of the membrane. 2 helical membrane passes run 49–86 (GEDW…LFAM) and 93–116 (LQYL…CQIV). Residues 122–126 (GSGIP) carry the Selectivity filter part_1 motif. Serine 123 serves as a coordination point for chloride. Positions 125–132 (IPELKTII) form an intramembrane region, helical. The next 2 membrane-spanning stretches (helical) occupy residues 141 to 160 (LTLR…LSAG) and 166 to 184 (EGPF…NQLL). Positions 164-168 (GKEGP) match the Selectivity filter part_2 motif. 2 consecutive intramembrane regions (helical) follow at residues 201 to 213 (ILTV…ISCC) and 217 to 225 (PLAGVLFSI). 3 helical membrane-spanning segments follow: residues 237 to 254 (YWRG…FRVL), 283 to 311 (LPAF…IVFM), and 320 to 339 (ILKK…LATL). Asparagine 365 is a glycosylation site (N-linked (GlcNAc...) asparagine). Helical transmembrane passes span 389 to 408 (NIFI…AALA) and 416 to 439 (GAFV…MALL). Residues 416-420 (GAFVP) carry the Selectivity filter part_3 motif. Phenylalanine 418 serves as a coordination point for chloride. Residues 456 to 470 (GEYAVIGAAAMTGAV) constitute an intramembrane region (helical). An intramembrane region (note=Loop between two helices) is located at residues 471-472 (TH). Residues 473–484 (AVSTAVICFELT) constitute an intramembrane region (helical). An intramembrane region (note=Loop between two helices) is located at residues 485-489 (GQISH). A helical transmembrane segment spans residues 490-506 (VLPMMVAVILANMVAQG). The Cytoplasmic portion of the chain corresponds to 507-810 (LQPSLYDSII…RTATSNSSGK (304 aa)). Chloride is bound at residue tyrosine 512. A CBS 1 domain is found at 543–601 (MVRDVTSIASTSTYGDLLHVLRQTKLKFFPFVDTPETNTLLGSIERTEVEGLLQRRISA). Disordered regions lie at residues 604–631 (RQPA…DVPG) and 658–688 (KVQT…KHKG). The 58-residue stretch at 724-781 (IDQSPFQLVEGTSLQKTHTLFSLLGLDRAYVTSMGKLVGVVALAEIQAAIEGSYQKGF) folds into the CBS 2 domain.

The protein belongs to the chloride channel (TC 2.A.49) family. ClC-0 subfamily. In terms of assembly, homodimer. Each subunit has channel activity ('Double barreled channel').

It localises to the membrane. Functionally, voltage-gated chloride channel. This channel is thought to ensure the high conductance of the non-innervated membrane of the electrocyte necessary for efficient current generation caused by sodium influx through the acetylcholine receptor at the innervated membrane. The chain is Chloride channel protein from Tetronarce californica (Pacific electric ray).